Reading from the N-terminus, the 371-residue chain is Cytochrome b (371 aa).

4 consecutive transmembrane segments (helical) span residues 25–45, 69–90, 105–125, and 170–190; these read FGSM…SLSM, WVMQ…YMYI, WLSG…GYVL, and FFAL…IHIM. H75 is a binding site for heme b. Heme b-binding residues include H174 and H188. H193 is an a ubiquinone binding site. The next 4 helical transmembrane spans lie at 218 to 238, 280 to 300, 312 to 332, and 339 to 358; these read YKDI…VSFF, LGGA…PFTH, LMQF…WTAT, and FTTI…MSNP.

Belongs to the cytochrome b family. The cytochrome bc1 complex contains 3 respiratory subunits (MT-CYB, CYC1 and UQCRFS1), 2 core proteins (UQCRC1 and UQCRC2) and probably 6 low-molecular weight proteins. The cofactor is heme b.

The protein resides in the mitochondrion inner membrane. Functionally, component of the ubiquinol-cytochrome c reductase complex (complex III or cytochrome b-c1 complex) that is part of the mitochondrial respiratory chain. The b-c1 complex mediates electron transfer from ubiquinol to cytochrome c. Contributes to the generation of a proton gradient across the mitochondrial membrane that is then used for ATP synthesis. The protein is Cytochrome b (MT-CYB) of Candoia aspera (New Guinea boa).